Here is a 145-residue protein sequence, read N- to C-terminus: Large ribosomal subunit protein uL13 (145 aa).

This sequence belongs to the universal ribosomal protein uL13 family. Part of the 50S ribosomal subunit.

This protein is one of the early assembly proteins of the 50S ribosomal subunit, although it is not seen to bind rRNA by itself. It is important during the early stages of 50S assembly. This chain is Large ribosomal subunit protein uL13, found in Bacillus cytotoxicus (strain DSM 22905 / CIP 110041 / 391-98 / NVH 391-98).